We begin with the raw amino-acid sequence, 562 residues long: Pyruvate kinase isozyme G, chloroplastic (562 aa).

Substrate is bound at residue Arg-121. Residues Asn-123, Ser-125, Asp-156, and Thr-157 each contribute to the K(+) site. 123–126 (NMSH) lines the ATP pocket. Glu-308 serves as a coordination point for Mg(2+). Residues Gly-331, Asp-332, and Thr-364 each contribute to the substrate site. Asp-332 is a binding site for Mg(2+).

It belongs to the pyruvate kinase family. In terms of assembly, homotetramer. Mg(2+) is required as a cofactor. K(+) serves as cofactor. Highest levels in leaves. Also found in stems, roots and flowers.

Its subcellular location is the plastid. It localises to the chloroplast. The catalysed reaction is pyruvate + ATP = phosphoenolpyruvate + ADP + H(+). It participates in carbohydrate degradation; glycolysis; pyruvate from D-glyceraldehyde 3-phosphate: step 5/5. This is Pyruvate kinase isozyme G, chloroplastic from Nicotiana tabacum (Common tobacco).